A 352-amino-acid chain; its full sequence is UDP-N-acetylglucosamine--N-acetylmuramyl-(pentapeptide) pyrophosphoryl-undecaprenol N-acetylglucosamine transferase 2 (352 aa).

Residues 11–13 (SAG), Arg-164, Ser-194, and Gln-289 each bind UDP-N-acetyl-alpha-D-glucosamine.

The protein belongs to the glycosyltransferase 28 family. MurG subfamily.

The protein resides in the cell membrane. It carries out the reaction di-trans,octa-cis-undecaprenyl diphospho-N-acetyl-alpha-D-muramoyl-L-alanyl-D-glutamyl-meso-2,6-diaminopimeloyl-D-alanyl-D-alanine + UDP-N-acetyl-alpha-D-glucosamine = di-trans,octa-cis-undecaprenyl diphospho-[N-acetyl-alpha-D-glucosaminyl-(1-&gt;4)]-N-acetyl-alpha-D-muramoyl-L-alanyl-D-glutamyl-meso-2,6-diaminopimeloyl-D-alanyl-D-alanine + UDP + H(+). It participates in cell wall biogenesis; peptidoglycan biosynthesis. Functionally, cell wall formation. Catalyzes the transfer of a GlcNAc subunit on undecaprenyl-pyrophosphoryl-MurNAc-pentapeptide (lipid intermediate I) to form undecaprenyl-pyrophosphoryl-MurNAc-(pentapeptide)GlcNAc (lipid intermediate II). This is UDP-N-acetylglucosamine--N-acetylmuramyl-(pentapeptide) pyrophosphoryl-undecaprenol N-acetylglucosamine transferase 2 from Bacillus cereus (strain ATCC 14579 / DSM 31 / CCUG 7414 / JCM 2152 / NBRC 15305 / NCIMB 9373 / NCTC 2599 / NRRL B-3711).